The following is a 161-amino-acid chain: 18.1 kDa class I heat shock protein (161 aa).

The region spanning 45–160 (DVAAFTNARV…QVKSIDISGA (116 aa)) is the sHSP domain.

Belongs to the small heat shock protein (HSP20) family. As to quaternary structure, may form oligomeric structures. Binds to AKR2A.

The protein resides in the cytoplasm. This Arabidopsis thaliana (Mouse-ear cress) protein is 18.1 kDa class I heat shock protein (HSP18.1).